A 153-amino-acid chain; its full sequence is Large ribosomal subunit protein uL13 (153 aa).

Belongs to the universal ribosomal protein uL13 family. In terms of assembly, part of the 50S ribosomal subunit.

In terms of biological role, this protein is one of the early assembly proteins of the 50S ribosomal subunit, although it is not seen to bind rRNA by itself. It is important during the early stages of 50S assembly. The protein is Large ribosomal subunit protein uL13 of Methylobacterium sp. (strain 4-46).